A 728-amino-acid polypeptide reads, in one-letter code: MSSRIDRDVINALIAGHFADPFSVLGMHQTQAGLEVRALLPDATDVWVIEPKTGRKVGKLECLDARGFFCGVLPRRKNFFRYQLAVTWHGQQNLIDDPYRFGPLIQEMDAWLLSEGTHLRPYETLGAHADTMDGVTGTRFSVWAPNARRVSVVGQFNYWDGRRHPMRLRKESGIWELFIPGAHNGQLYKFELLDANGNLRIKADPYAFEAQMRPETASMICGLPEKVTPSEERQKANQFDAPISIYEVHLGSWRRHTDNNFWLSYRELADQLVPYAKWMGFTHLELLPVNEHPFDGSWGYQPTGLYAPTRRFGTRDDFRYFINAAHAAGLNVILDWVPGHFPSDEFSLAEFDGTHLYEHSDPREGYHQDWNTLIYNYGRREVSNYLVGNALYWMERFGIDALRVDAVASMIYRDYSRKEGEWIPNEFGGRENLEAIEFLRNTNRIIGEQVPGAVSMAEESTDFAGVTRPPETGGLGFWFKWNLGWMHDTLDYMKLDPVYRQYHHDKLTFGMLYNHTENFVLPLSHDEVVHGKKSILDRMPGDAWQKFANLRAYYGWMWAFPGKKLLFMGNEFAQGREWNHDASLDWHLLEGGDNWHHGVQRLVRDLNHTYRHHKALHELDFDAYGFEWLVVDDNERSVLIFVRRDKAGNEIIVASNFTPVPRHDYRFGINQPGRWREILNTDSMHYHGSNTGNGGVVHSDEIESHGRQHSLNLTLPPLATIWLMREGE.

Asp-405 serves as the catalytic Nucleophile. Catalysis depends on Glu-458, which acts as the Proton donor.

It belongs to the glycosyl hydrolase 13 family. GlgB subfamily. As to quaternary structure, monomer.

It catalyses the reaction Transfers a segment of a (1-&gt;4)-alpha-D-glucan chain to a primary hydroxy group in a similar glucan chain.. Its pathway is glycan biosynthesis; glycogen biosynthesis. Its function is as follows. Catalyzes the formation of the alpha-1,6-glucosidic linkages in glycogen by scission of a 1,4-alpha-linked oligosaccharide from growing alpha-1,4-glucan chains and the subsequent attachment of the oligosaccharide to the alpha-1,6 position. This is 1,4-alpha-glucan branching enzyme GlgB from Salmonella paratyphi B (strain ATCC BAA-1250 / SPB7).